We begin with the raw amino-acid sequence, 323 residues long: Formimidoylglutamase (323 aa).

Residues H131, D157, H159, D161, C245, and D247 each contribute to the Mn(2+) site.

The protein belongs to the arginase family. Requires Mn(2+) as cofactor.

It carries out the reaction N-formimidoyl-L-glutamate + H2O = formamide + L-glutamate. Its pathway is amino-acid degradation; L-histidine degradation into L-glutamate; L-glutamate from N-formimidoyl-L-glutamate (hydrolase route): step 1/1. Catalyzes the conversion of N-formimidoyl-L-glutamate to L-glutamate and formamide. The sequence is that of Formimidoylglutamase from Geobacillus kaustophilus (strain HTA426).